We begin with the raw amino-acid sequence, 124 residues long: ATP synthase epsilon chain (124 aa).

Belongs to the ATPase epsilon chain family. As to quaternary structure, F-type ATPases have 2 components, CF(1) - the catalytic core - and CF(0) - the membrane proton channel. CF(1) has five subunits: alpha(3), beta(3), gamma(1), delta(1), epsilon(1). CF(0) has three main subunits: a, b and c.

It localises to the cell membrane. Its function is as follows. Produces ATP from ADP in the presence of a proton gradient across the membrane. In Corynebacterium efficiens (strain DSM 44549 / YS-314 / AJ 12310 / JCM 11189 / NBRC 100395), this protein is ATP synthase epsilon chain.